The following is a 302-amino-acid chain: Stanniocalcin-2 (302 aa).

The N-terminal stretch at 1-24 (MCAERLGHFMTLALVLATIDPARG) is a signal peptide. The interval 23–44 (RGTDATNPPEGPQDRSSQQKGR) is disordered. Residue Asn73 is glycosylated (N-linked (GlcNAc...) asparagine). The tract at residues 218–302 (PPTAPPERQP…EQSEYSDIRR (85 aa)) is disordered. Residues 227 to 264 (PQVDRAKLSRAHHGEAGHHLPEPSSRETGRGAKGERGS) are compositionally biased toward basic and acidic residues. Residues Ser250 and Ser251 each carry the phosphoserine modification. At Thr254 the chain carries Phosphothreonine.

It belongs to the stanniocalcin family. In terms of assembly, homodimer; disulfide-linked.

Its subcellular location is the secreted. Functionally, has an anti-hypocalcemic action on calcium and phosphate homeostasis. This Macaca nemestrina (Pig-tailed macaque) protein is Stanniocalcin-2 (STC2).